The chain runs to 714 residues: Nucleolin (714 aa).

The interval 1–303 (MVKLAKAGKT…AKKQKVEGSE (303 aa)) is disordered. Residues K9, K15, and K16 each carry the N6-acetyllysine modification. Residues 24–42 (VEEDSEDEEMSEEEDDSSG) are compositionally biased toward acidic residues. Phosphoserine is present on residues S28, S34, S40, and S41. Positions 55–106 (ATATPAKKVVVSQTKKVAVPTPAKKAAVTPGKKAAATPAKKAVTPAKAVATP) are enriched in low complexity. Repeat 1 spans residues 57-64 (ATPAKKVV). Positions 57 to 134 (ATPAKKVVVS…GAVTPAKGAK (78 aa)) are 8 X 8 AA tandem repeats of X-T-P-X-K-K-X-X. A Phosphoserine modification is found at S66. Phosphothreonine occurs at positions 68, 75, 83, and 91. 3 tandem repeats follow at residues 74 to 81 (PTPAKKAA), 82 to 89 (VTPGKKAA), and 90 to 97 (ATPAKKAV). Position 95 is an N6-acetyllysine (K95). T98 carries the post-translational modification Phosphothreonine. Residues 98-103 (TPAKAV) form a 5; truncated repeat. Residue K101 is modified to N6-acetyllysine. Repeat unit 6 spans residues 104–111 (ATPGKKGA). At T105 the chain carries Phosphothreonine. Residue K108 is modified to N6-acetyllysine. A Phosphothreonine modification is found at T112. K115 is modified (N6-acetyllysine). A run of 2 repeats spans residues 119 to 126 (ATPGKKGA) and 127 to 134 (VTPAKGAK). T120 is modified (phosphothreonine). Residue K123 is modified to N6-acetyllysine. Residues S144 and S157 each carry the phosphoserine modification. The span at 144–170 (SDEDEDDDDDEDDSDEDEEDEEEDEFE) shows a compositional bias: acidic residues. A compositionally biased stretch (low complexity) spans 171 to 187 (PPVVKGKQGKVAAAAPA). Position 188 is a phosphoserine (S188). Acidic residues predominate over residues 188–216 (SEDEDEEEDEEEEEEDEEEEDDSEEEEAM). T219 is subject to Phosphothreonine. The span at 240–272 (EEDDDDEEEDEDEEEDEEEEEDEEEEEEEEEEE) shows a compositional bias: acidic residues. The span at 285–301 (MTKQKEVPEAKKQKVEG) shows a compositional bias: basic and acidic residues. K298 is covalently cross-linked (Glycyl lysine isopeptide (Lys-Gly) (interchain with G-Cter in SUMO1); alternate). K298 participates in a covalent cross-link: Glycyl lysine isopeptide (Lys-Gly) (interchain with G-Cter in SUMO2); alternate. S302 is subject to Phosphoserine. RRM domains lie at 308–384 (FNLF…KPKG) and 394–467 (RTLL…YTGE). K319 bears the N6-acetyllysine mark. A Glycyl lysine isopeptide (Lys-Gly) (interchain with G-Cter in SUMO1); alternate cross-link involves residue K325. K325 is covalently cross-linked (Glycyl lysine isopeptide (Lys-Gly) (interchain with G-Cter in SUMO2); alternate). N6-acetyllysine is present on K349. S357 carries the phosphoserine modification. A Phosphothreonine modification is found at T368. Residue K371 forms a Glycyl lysine isopeptide (Lys-Gly) (interchain with G-Cter in SUMO2) linkage. A Glycyl lysine isopeptide (Lys-Gly) (interchain with G-Cter in SUMO2); alternate cross-link involves residue K378. N6-acetyllysine; alternate is present on K378. An N6-acetyllysine modification is found at K399. S402 is modified (phosphoserine). T406 carries the post-translational modification Phosphothreonine. N6-acetyllysine occurs at positions 428 and 445. S459 and S461 each carry phosphoserine. An N6-acetyllysine mark is found at K468 and K477. One can recognise an RRM 3 domain in the interval 486–560 (KTLVLSNLSY…RTIRLELQGP (75 aa)). A Glycyl lysine isopeptide (Lys-Gly) (interchain with G-Cter in SUMO2); alternate cross-link involves residue K513. Residue K513 is modified to N6-acetyllysine; alternate. N6-acetyllysine is present on K521. S563 bears the Phosphoserine mark. The residue at position 572 (K572) is an N6-acetyllysine. An RRM 4 domain is found at 572-647 (KTLFVKGLSE…NKVTLDWAKP (76 aa)). K577 participates in a covalent cross-link: Glycyl lysine isopeptide (Lys-Gly) (interchain with G-Cter in SUMO2); alternate. K577 bears the N6-acetyllysine; alternate mark. At S580 the chain carries Phosphoserine. Residue K589 forms a Glycyl lysine isopeptide (Lys-Gly) (interchain with G-Cter in SUMO1); alternate linkage. K589 is covalently cross-linked (Glycyl lysine isopeptide (Lys-Gly) (interchain with G-Cter in SUMO2); alternate). 2 positions are modified to phosphoserine: S591 and S619. Residue K624 forms a Glycyl lysine isopeptide (Lys-Gly) (interchain with G-Cter in SUMO2) linkage. Positions 642-714 (LDWAKPKGEG…KPQGKKTKFE (73 aa)) are disordered. Residue K646 is modified to N6-acetyllysine. The span at 650–703 (EGGFGGRGGGRGGFGGRGGGRGGGRGGFGGRGRGGFGGRGGFRGGRGGGGGGGD) shows a compositional bias: gly residues. An asymmetric dimethylarginine mark is found at R656, R660, R666, R670, R674, R680, R682, R688, and R692. Position 695 is an asymmetric dimethylarginine; alternate (R695). At R695 the chain carries Omega-N-methylarginine; alternate.

Identified in a IGF2BP1-dependent mRNP granule complex containing untranslated mRNAs. Component of the SWAP complex that consists of NPM1, NCL/nucleolin, PARP1 and SWAP70. Component of a complex which is at least composed of HTATSF1/Tat-SF1, the P-TEFb complex components CDK9 and CCNT1, RNA polymerase II, SUPT5H, and NCL/nucleolin. Interacts with AICDA. Interacts with APTX. Interacts with C1QBP. Interacts with ERBB4. Interacts (via C-terminus) with FMR1 isoform 6 (via N-terminus). Interacts with GZF1; this interaction is important for nucleolar localization of GZF1. Interacts with NSUN2. Interacts with NVL. Interacts (via N-terminus domain) with SETX. Interacts (via RRM1 and C-terminal RRM4/Arg/Gly-rich domains) with TERT; the interaction is important for nucleolar localization of TERT. Interacts with WDR46. Interacts with ZFP36. Interacts with LRRC34. Interacts with RRP1B. Interacts with HNRNPU; this interaction occurs during mitosis. Interacts with RIOK1; RIOK1 recruits NCL to PRMT5 for symmetrically methylation. Interacts with ZBTB7B. Interacts with MDK; this interaction promotes NCL clustering and lateral movements of this complex into lipid rafts leading to MDK internalization. Interacts with HDGF. Interacts with ALKBH2. Interacts with IGFBP5; this interaction is necessary for IGFBP5 localization to the nucleus. Interacts with DDX24 (when ubiquitinated); this interaction may be important during ribosome biogenesis. Post-translationally, some glutamate residues are glycylated by TTLL8. This modification occurs exclusively on glutamate residues and results in a glycine chain on the gamma-carboxyl group. Symmetrically methylated by PRMT5.

Its subcellular location is the nucleus. It localises to the nucleolus. The protein resides in the cytoplasm. In terms of biological role, nucleolin is the major nucleolar protein of growing eukaryotic cells. It is found associated with intranucleolar chromatin and pre-ribosomal particles. It induces chromatin decondensation by binding to histone H1. It is thought to play a role in pre-rRNA transcription and ribosome assembly. May play a role in the process of transcriptional elongation. Binds RNA oligonucleotides with 5'-UUAGGG-3' repeats more tightly than the telomeric single-stranded DNA 5'-TTAGGG-3' repeats. The protein is Nucleolin (NCL) of Mesocricetus auratus (Golden hamster).